Consider the following 389-residue polypeptide: Phospho-N-acetylmuramoyl-pentapeptide-transferase (389 aa).

A run of 10 helical transmembrane segments spans residues arginine 25–isoleucine 45, threonine 73–leucine 93, phenylalanine 97–tyrosine 117, phenylalanine 135–alanine 155, isoleucine 190–alanine 210, glycine 222–methionine 242, glycine 258–tryptophan 278, valine 286–isoleucine 306, isoleucine 311–valine 331, and glutamine 366–leucine 386.

It belongs to the glycosyltransferase 4 family. MraY subfamily. It depends on Mg(2+) as a cofactor.

It is found in the cell inner membrane. It catalyses the reaction UDP-N-acetyl-alpha-D-muramoyl-L-alanyl-gamma-D-glutamyl-meso-2,6-diaminopimeloyl-D-alanyl-D-alanine + di-trans,octa-cis-undecaprenyl phosphate = di-trans,octa-cis-undecaprenyl diphospho-N-acetyl-alpha-D-muramoyl-L-alanyl-D-glutamyl-meso-2,6-diaminopimeloyl-D-alanyl-D-alanine + UMP. It functions in the pathway cell wall biogenesis; peptidoglycan biosynthesis. Its function is as follows. Catalyzes the initial step of the lipid cycle reactions in the biosynthesis of the cell wall peptidoglycan: transfers peptidoglycan precursor phospho-MurNAc-pentapeptide from UDP-MurNAc-pentapeptide onto the lipid carrier undecaprenyl phosphate, yielding undecaprenyl-pyrophosphoryl-MurNAc-pentapeptide, known as lipid I. This chain is Phospho-N-acetylmuramoyl-pentapeptide-transferase, found in Burkholderia vietnamiensis (strain G4 / LMG 22486) (Burkholderia cepacia (strain R1808)).